The primary structure comprises 164 residues: UPF0251 protein MA_0157 (164 aa).

The interval 91–124 (GDYRMPRGDGTGPAGQGPVGGGRSRGQGKGRGGR) is disordered. A compositionally biased stretch (gly residues) spans 99–115 (DGTGPAGQGPVGGGRSR).

This sequence belongs to the UPF0251 family.

This is UPF0251 protein MA_0157 from Methanosarcina acetivorans (strain ATCC 35395 / DSM 2834 / JCM 12185 / C2A).